Reading from the N-terminus, the 252-residue chain is Imidazole glycerol phosphate synthase subunit HisF (252 aa).

Active-site residues include Asp11 and Asp130.

The protein belongs to the HisA/HisF family. Heterodimer of HisH and HisF.

The protein localises to the cytoplasm. It carries out the reaction 5-[(5-phospho-1-deoxy-D-ribulos-1-ylimino)methylamino]-1-(5-phospho-beta-D-ribosyl)imidazole-4-carboxamide + L-glutamine = D-erythro-1-(imidazol-4-yl)glycerol 3-phosphate + 5-amino-1-(5-phospho-beta-D-ribosyl)imidazole-4-carboxamide + L-glutamate + H(+). It functions in the pathway amino-acid biosynthesis; L-histidine biosynthesis; L-histidine from 5-phospho-alpha-D-ribose 1-diphosphate: step 5/9. Functionally, IGPS catalyzes the conversion of PRFAR and glutamine to IGP, AICAR and glutamate. The HisF subunit catalyzes the cyclization activity that produces IGP and AICAR from PRFAR using the ammonia provided by the HisH subunit. The protein is Imidazole glycerol phosphate synthase subunit HisF of Anoxybacillus flavithermus (strain DSM 21510 / WK1).